Reading from the N-terminus, the 284-residue chain is 4-diphosphocytidyl-2-C-methyl-D-erythritol kinase (284 aa).

Residue Lys14 is part of the active site. 98-108 (PMGGGLGGGSS) contributes to the ATP binding site. Asp140 is an active-site residue.

The protein belongs to the GHMP kinase family. IspE subfamily.

It catalyses the reaction 4-CDP-2-C-methyl-D-erythritol + ATP = 4-CDP-2-C-methyl-D-erythritol 2-phosphate + ADP + H(+). It functions in the pathway isoprenoid biosynthesis; isopentenyl diphosphate biosynthesis via DXP pathway; isopentenyl diphosphate from 1-deoxy-D-xylulose 5-phosphate: step 3/6. Functionally, catalyzes the phosphorylation of the position 2 hydroxy group of 4-diphosphocytidyl-2C-methyl-D-erythritol. This is 4-diphosphocytidyl-2-C-methyl-D-erythritol kinase from Shewanella oneidensis (strain ATCC 700550 / JCM 31522 / CIP 106686 / LMG 19005 / NCIMB 14063 / MR-1).